The chain runs to 124 residues: Fluoride-specific ion channel FluC (124 aa).

The next 4 helical transmembrane spans lie at 4-24 (ILFV…ISIF), 35-55 (FGTL…YALG), 70-90 (VGLL…LLLI), and 95-115 (WLKA…MVYL). The Na(+) site is built by Gly74 and Thr77.

Belongs to the fluoride channel Fluc/FEX (TC 1.A.43) family.

It is found in the cell inner membrane. It catalyses the reaction fluoride(in) = fluoride(out). Its activity is regulated as follows. Na(+) is not transported, but it plays an essential structural role and its presence is essential for fluoride channel function. Functionally, fluoride-specific ion channel. Important for reducing fluoride concentration in the cell, thus reducing its toxicity. This is Fluoride-specific ion channel FluC from Shewanella woodyi (strain ATCC 51908 / MS32).